Consider the following 467-residue polypeptide: Amino-acid permease RocE (467 aa).

12 helical membrane passes run 21 to 41 (FMISLGGVIGTGFFLGTGFTI), 47 to 67 (LGAVLSYLVGGFIMFLTMLCL), 87 to 107 (FISPAFGFAFGWLYWLGWAVT), 122 to 142 (WFPHIDVWIWCLVFAALMFIL), 162 to 182 (ILIILLFIILGGAAMFGLIDL), 207 to 227 (MLITMITVNFAFQGTELIGVA), 246 to 266 (VWRTLVFFVLSIIVIAGMIPW), 283 to 303 (IGIPYAADIMNFVILIALLSV), 336 to 356 (VPMYSLIVTMAVACLSLLTKF), 361 to 381 (TVYMVLLSLAGMSAQVGWITI), 409 to 429 (YPVLPLIGLTLNTVVLISLAF), and 435 to 455 (IALYCGVPFMIICYIIYHVVI).

The protein belongs to the amino acid-polyamine-organocation (APC) superfamily. Amino acid transporter (AAT) (TC 2.A.3.1) family.

It is found in the cell membrane. Its function is as follows. Putative transport protein involved in arginine degradative pathway. Probably transports arginine or ornithine. The protein is Amino-acid permease RocE of Bacillus subtilis (strain 168).